Reading from the N-terminus, the 166-residue chain is Mitochondrial translation release factor in rescue (166 aa).

A mitochondrion-targeting transit peptide spans 1 to 35 (MSTVGLFHFPTPLTRICPAPWGLRLWEKLTLLSPG). Residues 57-121 (ENELEEQFVK…LQEKVDVFYN (65 aa)) are GGQ domain. The GGQ motif lies at 71 to 73 (GGQ). The residue at position 73 (Q73) is an N5-methylglutamine. Residues 122–148 (GENSPVHKEKREAAKKKQERKKRAKET) are disordered. Residues 126-137 (PVHKEKREAAKK) show a composition bias toward basic and acidic residues. A coiled-coil region spans residues 127–160 (VHKEKREAAKKKQERKKRAKETLEKKKLLKELWE).

This sequence belongs to the prokaryotic/mitochondrial release factor family. In terms of assembly, interacts (via C-terminus) with MTRES1 (via S4 domain). Associates with mitoribosomal S39 large subunit, peptidyl tRNA and nascent chain. Post-translationally, methylation of glutamine in the GGQ triplet by HEMK1. In terms of tissue distribution, expressed in all areas of the brain tested.

It is found in the mitochondrion. In terms of biological role, part of a mitoribosome-associated quality control pathway that prevents aberrant translation by responding to interruptions during elongation. As heterodimer with MTRES1, ejects the unfinished nascent chain and peptidyl transfer RNA (tRNA), respectively, from stalled ribosomes. Recruitment of mitoribosome biogenesis factors to these quality control intermediates suggests additional roles for MTRES1 and MTRF during mitoribosome rescue. This is Mitochondrial translation release factor in rescue from Homo sapiens (Human).